The following is a 191-amino-acid chain: MSAKIILVFCAQALFVQSALSQCTSRATVAADRGIIGGYGLGAPYGLAYGLEAPLGLGYGLGAPCGLGGPAIDITPTIGGGLPVSSASAIAPVGLAVASENVYEGILAAAGELPFVGTVGVEGVLPTAGAGAVHHSCGNGINAMASRDAAFAPGYAGAYGIGLGAYGLGVPALEVPALGYRAGWRGCGCGL.

The N-terminal stretch at 1–21 (MSAKIILVFCAQALFVQSALS) is a signal peptide.

This sequence belongs to the chorion protein family.

In terms of biological role, this protein is one of many from the eggshell of the gypsy moth. This Lymantria dispar (Gypsy moth) protein is Chorion class B protein Ld34.